Consider the following 354-residue polypeptide: NAD-dependent protein deacetylase hst2-2 (354 aa).

The 264-residue stretch at 16 to 279 (QCQNQTTLDS…REVARHLGWD (264 aa)) folds into the Deacetylase sirtuin-type domain. NAD(+)-binding positions include 43–63 (GAGL…TGLY) and 126–129 (QNID). The Proton acceptor role is filled by histidine 146. Zn(2+) is bound by residues cysteine 154, cysteine 157, cysteine 178, and cysteine 183. NAD(+) contacts are provided by residues 220–222 (GTS), 245–247 (NRE), and cysteine 265.

This sequence belongs to the sirtuin family. Class I subfamily. Zn(2+) serves as cofactor.

The protein localises to the nucleus. It catalyses the reaction N(6)-acetyl-L-lysyl-[protein] + NAD(+) + H2O = 2''-O-acetyl-ADP-D-ribose + nicotinamide + L-lysyl-[protein]. Functionally, NAD-dependent histone deacetylase, which could function in telomeric silencing, cell cycle progression and chromosome stability. The protein is NAD-dependent protein deacetylase hst2-2 of Emericella nidulans (strain FGSC A4 / ATCC 38163 / CBS 112.46 / NRRL 194 / M139) (Aspergillus nidulans).